Consider the following 142-residue polypeptide: Large ribosomal subunit protein uL11 (142 aa).

This sequence belongs to the universal ribosomal protein uL11 family. As to quaternary structure, part of the ribosomal stalk of the 50S ribosomal subunit. Interacts with L10 and the large rRNA to form the base of the stalk. L10 forms an elongated spine to which L12 dimers bind in a sequential fashion forming a multimeric L10(L12)X complex. One or more lysine residues are methylated.

In terms of biological role, forms part of the ribosomal stalk which helps the ribosome interact with GTP-bound translation factors. This is Large ribosomal subunit protein uL11 from Dictyoglomus turgidum (strain DSM 6724 / Z-1310).